The sequence spans 83 residues: Apolipoprotein C-I, acidic form (83 aa).

The N-terminal stretch at 1 to 26 is a signal peptide; it reads MRLFLSLPVLVVVLSIVLEGPAPAQG.

Belongs to the apolipoprotein C1 family.

The protein localises to the secreted. This is Apolipoprotein C-I, acidic form (APOC1A) from Pan paniscus (Pygmy chimpanzee).